The chain runs to 659 residues: DNA ligase (659 aa).

Residues 32-36 (DAEYD), 81-82 (SL), and glutamate 110 contribute to the NAD(+) site. The N6-AMP-lysine intermediate role is filled by lysine 112. Residues arginine 133, glutamate 168, lysine 284, and lysine 308 each contribute to the NAD(+) site. 4 residues coordinate Zn(2+): cysteine 402, cysteine 405, cysteine 420, and cysteine 425. Positions 582 to 659 (AKPQIFAGKS…SEEEFAELLP (78 aa)) constitute a BRCT domain.

This sequence belongs to the NAD-dependent DNA ligase family. LigA subfamily. Mg(2+) serves as cofactor. Requires Mn(2+) as cofactor.

The catalysed reaction is NAD(+) + (deoxyribonucleotide)n-3'-hydroxyl + 5'-phospho-(deoxyribonucleotide)m = (deoxyribonucleotide)n+m + AMP + beta-nicotinamide D-nucleotide.. DNA ligase that catalyzes the formation of phosphodiester linkages between 5'-phosphoryl and 3'-hydroxyl groups in double-stranded DNA using NAD as a coenzyme and as the energy source for the reaction. It is essential for DNA replication and repair of damaged DNA. The sequence is that of DNA ligase from Desulfitobacterium hafniense (strain Y51).